The following is a 448-amino-acid chain: Cysteine--tRNA ligase (448 aa).

Cys27 contacts Zn(2+). Residues 29-39 (PTVYNYIHVGN) carry the 'HIGH' region motif. Residues Cys210, His235, and Glu239 each contribute to the Zn(2+) site. Positions 267–271 (KMSKS) match the 'KMSKS' region motif. Lys270 contacts ATP.

Belongs to the class-I aminoacyl-tRNA synthetase family. As to quaternary structure, monomer. It depends on Zn(2+) as a cofactor.

It localises to the cytoplasm. The catalysed reaction is tRNA(Cys) + L-cysteine + ATP = L-cysteinyl-tRNA(Cys) + AMP + diphosphate. The chain is Cysteine--tRNA ligase from Lactococcus lactis subsp. cremoris (strain SK11).